The chain runs to 156 residues: SsrA-binding protein (156 aa).

A disordered region spans residues 131-156 (YDKRQTLREQQDKREALRVMRERNRG).

It belongs to the SmpB family.

The protein localises to the cytoplasm. In terms of biological role, required for rescue of stalled ribosomes mediated by trans-translation. Binds to transfer-messenger RNA (tmRNA), required for stable association of tmRNA with ribosomes. tmRNA and SmpB together mimic tRNA shape, replacing the anticodon stem-loop with SmpB. tmRNA is encoded by the ssrA gene; the 2 termini fold to resemble tRNA(Ala) and it encodes a 'tag peptide', a short internal open reading frame. During trans-translation Ala-aminoacylated tmRNA acts like a tRNA, entering the A-site of stalled ribosomes, displacing the stalled mRNA. The ribosome then switches to translate the ORF on the tmRNA; the nascent peptide is terminated with the 'tag peptide' encoded by the tmRNA and targeted for degradation. The ribosome is freed to recommence translation, which seems to be the essential function of trans-translation. The polypeptide is SsrA-binding protein (Arthrobacter sp. (strain FB24)).